A 156-amino-acid polypeptide reads, in one-letter code: ATP synthase subunit b (156 aa).

Residues alanine 11 to alanine 31 form a helical membrane-spanning segment.

The protein belongs to the ATPase B chain family. F-type ATPases have 2 components, F(1) - the catalytic core - and F(0) - the membrane proton channel. F(1) has five subunits: alpha(3), beta(3), gamma(1), delta(1), epsilon(1). F(0) has three main subunits: a(1), b(2) and c(10-14). The alpha and beta chains form an alternating ring which encloses part of the gamma chain. F(1) is attached to F(0) by a central stalk formed by the gamma and epsilon chains, while a peripheral stalk is formed by the delta and b chains.

Its subcellular location is the cell inner membrane. Functionally, f(1)F(0) ATP synthase produces ATP from ADP in the presence of a proton or sodium gradient. F-type ATPases consist of two structural domains, F(1) containing the extramembraneous catalytic core and F(0) containing the membrane proton channel, linked together by a central stalk and a peripheral stalk. During catalysis, ATP synthesis in the catalytic domain of F(1) is coupled via a rotary mechanism of the central stalk subunits to proton translocation. In terms of biological role, component of the F(0) channel, it forms part of the peripheral stalk, linking F(1) to F(0). The protein is ATP synthase subunit b of Salmonella gallinarum (strain 287/91 / NCTC 13346).